We begin with the raw amino-acid sequence, 358 residues long: Electron transfer flavoprotein subunit alpha, mitochondrial (358 aa).

298-326 (LYMAFGVSGAIQHLAGMRDSKVIVAVNKD) contacts FAD.

The protein belongs to the ETF alpha-subunit/FixB family. Heterodimer of an alpha and a beta subunit. Requires FAD as cofactor.

The protein resides in the mitochondrion matrix. Its function is as follows. The electron transfer flavoprotein serves as a specific electron acceptor for several dehydrogenases, including five acyl-CoA dehydrogenases, glutaryl-CoA and sarcosine dehydrogenase. It transfers the electrons to the main mitochondrial respiratory chain via ETF-ubiquinone oxidoreductase (ETF dehydrogenase). The chain is Electron transfer flavoprotein subunit alpha, mitochondrial (ETFA) from Oryza sativa subsp. indica (Rice).